We begin with the raw amino-acid sequence, 58 residues long: Sec-independent protein translocase protein TatA (58 aa).

The chain crosses the membrane as a helical span at residues 1–21; that stretch reads MLSNIGFPGLILILVAILILF.

Belongs to the TatA/E family. As to quaternary structure, forms a complex with TatC.

It is found in the cell membrane. Part of the twin-arginine translocation (Tat) system that transports large folded proteins containing a characteristic twin-arginine motif in their signal peptide across membranes. TatA could form the protein-conducting channel of the Tat system. This chain is Sec-independent protein translocase protein TatA, found in Bacillus cytotoxicus (strain DSM 22905 / CIP 110041 / 391-98 / NVH 391-98).